The sequence spans 254 residues: 5'-nucleotidase SurE (254 aa).

D8, D9, S38, and N91 together coordinate a divalent metal cation.

Belongs to the SurE nucleotidase family. A divalent metal cation serves as cofactor.

Its subcellular location is the cytoplasm. It carries out the reaction a ribonucleoside 5'-phosphate + H2O = a ribonucleoside + phosphate. In terms of biological role, nucleotidase that shows phosphatase activity on nucleoside 5'-monophosphates. This is 5'-nucleotidase SurE from Anaeromyxobacter sp. (strain Fw109-5).